The chain runs to 151 residues: Ribosome maturation factor RimP (151 aa).

This sequence belongs to the RimP family.

The protein localises to the cytoplasm. In terms of biological role, required for maturation of 30S ribosomal subunits. This Vibrio parahaemolyticus serotype O3:K6 (strain RIMD 2210633) protein is Ribosome maturation factor RimP.